The primary structure comprises 70 residues: ATP synthase subunit c (70 aa).

The next 2 helical transmembrane spans lie at 4–24 (IAAGIALCGSAIGAGIGNGML) and 48–68 (ISMALVEAMPIIVIAMSFVLI).

Belongs to the ATPase C chain family. As to quaternary structure, F-type ATPases have 2 components, F(1) - the catalytic core - and F(0) - the membrane proton channel. F(1) has five subunits: alpha(3), beta(3), gamma(1), delta(1), epsilon(1). F(0) has three main subunits: a(1), b(2) and c(10-14). The alpha and beta chains form an alternating ring which encloses part of the gamma chain. F(1) is attached to F(0) by a central stalk formed by the gamma and epsilon chains, while a peripheral stalk is formed by the delta and b chains.

The protein localises to the cell membrane. Functionally, f(1)F(0) ATP synthase produces ATP from ADP in the presence of a proton or sodium gradient. F-type ATPases consist of two structural domains, F(1) containing the extramembraneous catalytic core and F(0) containing the membrane proton channel, linked together by a central stalk and a peripheral stalk. During catalysis, ATP synthesis in the catalytic domain of F(1) is coupled via a rotary mechanism of the central stalk subunits to proton translocation. Its function is as follows. Key component of the F(0) channel; it plays a direct role in translocation across the membrane. A homomeric c-ring of between 10-14 subunits forms the central stalk rotor element with the F(1) delta and epsilon subunits. This Oenococcus oeni (strain ATCC BAA-331 / PSU-1) protein is ATP synthase subunit c.